Reading from the N-terminus, the 397-residue chain is MSKLDSLFTAALEQAAQRQVRRRLRHAAATPPGRLALDGRTLVNFSSNDYLGLARHPLLAERASLWATRHGAGAQASRLVCGNLDLHEQVEAKLARLKGTEAALLLASGWQANAAVLPALFKAAAAQGEPQVYTDRLNHASLHHGCQAAGVRQIRFRHNDLAHLEHLLAERAGAPGARFIVTESVFSMDGDRADVPALAALAARHHAFLYLDEAHATGVLGPRGMGLAGLAPGGVDLAMGTFSKGLGSFGAYVAGSRALCDYLVNACSGFIYTTALPPAVLGAIDAALDLVPRLDQARATLQGHGERLRASLAAQGIDCGASSTQIVPAIIGDAGHALALAAELERRGLLAVAIRPPTVPAGTSRLRIALSAAHGEAELDQLIEALAAGWRAVRQAA.

R22 lines the substrate pocket. 109-110 (GW) contacts pyridoxal 5'-phosphate. H139 serves as a coordination point for substrate. Residues S187, 212–215 (DEAH), and 241–244 (TFSK) each bind pyridoxal 5'-phosphate. K244 is subject to N6-(pyridoxal phosphate)lysine. T358 contributes to the substrate binding site.

It belongs to the class-II pyridoxal-phosphate-dependent aminotransferase family. BioF subfamily. Homodimer. Pyridoxal 5'-phosphate serves as cofactor.

It catalyses the reaction 6-carboxyhexanoyl-[ACP] + L-alanine + H(+) = (8S)-8-amino-7-oxononanoate + holo-[ACP] + CO2. It functions in the pathway cofactor biosynthesis; biotin biosynthesis. Its function is as follows. Catalyzes the decarboxylative condensation of pimeloyl-[acyl-carrier protein] and L-alanine to produce 8-amino-7-oxononanoate (AON), [acyl-carrier protein], and carbon dioxide. This chain is Putative 8-amino-7-oxononanoate synthase (bioF), found in Bordetella pertussis (strain Tohama I / ATCC BAA-589 / NCTC 13251).